A 201-amino-acid polypeptide reads, in one-letter code: MVSSGYPPIMNDLIRRLSKLPGLGEKSATRIAMHLLKMSRTDAESLADAIRELRSRIRTCSRCFHFTDAEECSICADPARDTGEICVVETTADLLAIEQSGAYRGRYHVLQGVLAPLDAVGPDDLRIRELLERIDREGAREVIIATNPSSEGEATAHYLLKLLKDRNVRVSRIAYGIPMGGDLKYTDRFTLERALKGRQAF.

Residues 60-75 (CSRCFHFTDAEECSIC) form a C4-type zinc finger. The 96-residue stretch at 83–178 (GEICVVETTA…RVSRIAYGIP (96 aa)) folds into the Toprim domain.

It belongs to the RecR family.

May play a role in DNA repair. It seems to be involved in an RecBC-independent recombinational process of DNA repair. It may act with RecF and RecO. In Syntrophobacter fumaroxidans (strain DSM 10017 / MPOB), this protein is Recombination protein RecR.